We begin with the raw amino-acid sequence, 267 residues long: Ribosomal RNA small subunit methyltransferase J (267 aa).

S-adenosyl-L-methionine is bound by residues 133-134 (ER) and Asp187.

This sequence belongs to the methyltransferase superfamily. RsmJ family.

It localises to the cytoplasm. The catalysed reaction is guanosine(1516) in 16S rRNA + S-adenosyl-L-methionine = N(2)-methylguanosine(1516) in 16S rRNA + S-adenosyl-L-homocysteine + H(+). Functionally, specifically methylates the guanosine in position 1516 of 16S rRNA. This Halorhodospira halophila (strain DSM 244 / SL1) (Ectothiorhodospira halophila (strain DSM 244 / SL1)) protein is Ribosomal RNA small subunit methyltransferase J.